The following is a 413-amino-acid chain: Divalent metal cation transporter MntH (413 aa).

11 consecutive transmembrane segments (helical) span residues 19-39 (LALM…GNFA), 46-66 (ASFG…AMLI), 94-114 (VWFY…AEFI), 122-142 (LVLG…TFLI), 156-176 (VIGG…IFSQ), 196-216 (AVFL…IYLH), 241-261 (IAMT…AAAF), 290-310 (IFGL…TLAG), 329-349 (AITM…TRIL), 350-370 (VMSQ…LLIF), and 389-409 (IGWA…VGSL).

Belongs to the NRAMP family.

It is found in the cell inner membrane. Its function is as follows. H(+)-stimulated, divalent metal cation uptake system. The protein is Divalent metal cation transporter MntH of Klebsiella pneumoniae subsp. pneumoniae (strain ATCC 700721 / MGH 78578).